The chain runs to 358 residues: Fructose-bisphosphate aldolase 5, cytosolic (358 aa).

At Ser2 the chain carries N-acetylserine. Arg39 serves as a coordination point for substrate. Cys68 carries the post-translational modification S-glutathionyl cysteine; transient. An S-glutathionyl cysteine; transient; alternate modification is found at Cys173. Position 173 is an S-nitrosocysteine; transient; alternate (Cys173). Residue Glu183 is the Proton acceptor of the active site. Lys225 functions as the Schiff-base intermediate with dihydroxyacetone-P in the catalytic mechanism. Residues 266 to 268 and Arg298 each bind substrate; that span reads SGG. The residue at position 350 (Ser350) is a Phosphoserine.

It belongs to the class I fructose-bisphosphate aldolase family. Homotetramer. Interacts with TRX3. S-glutathionylated at Cys-68 and Cys-173. In terms of processing, S-nitrosylated at Cys-173. Expressed in rosette leaves and cauline leaves.

The protein localises to the cytoplasm. It is found in the cytosol. It catalyses the reaction beta-D-fructose 1,6-bisphosphate = D-glyceraldehyde 3-phosphate + dihydroxyacetone phosphate. It participates in carbohydrate degradation; glycolysis; D-glyceraldehyde 3-phosphate and glycerone phosphate from D-glucose: step 4/4. Fructose-bisphosphate aldolase that plays a key role in glycolysis and gluconeogenesis. The chain is Fructose-bisphosphate aldolase 5, cytosolic from Arabidopsis thaliana (Mouse-ear cress).